A 196-amino-acid chain; its full sequence is Pyridoxal 5'-phosphate synthase subunit PdxT (196 aa).

47–49 provides a ligand contact to L-glutamine; that stretch reads GES. C79 serves as the catalytic Nucleophile. L-glutamine is bound by residues R106 and 134–135; that span reads IR. Catalysis depends on charge relay system residues H170 and E172.

This sequence belongs to the glutaminase PdxT/SNO family. As to quaternary structure, in the presence of PdxS, forms a dodecamer of heterodimers. Only shows activity in the heterodimer.

The catalysed reaction is aldehydo-D-ribose 5-phosphate + D-glyceraldehyde 3-phosphate + L-glutamine = pyridoxal 5'-phosphate + L-glutamate + phosphate + 3 H2O + H(+). It carries out the reaction L-glutamine + H2O = L-glutamate + NH4(+). It participates in cofactor biosynthesis; pyridoxal 5'-phosphate biosynthesis. In terms of biological role, catalyzes the hydrolysis of glutamine to glutamate and ammonia as part of the biosynthesis of pyridoxal 5'-phosphate. The resulting ammonia molecule is channeled to the active site of PdxS. In Bacillus cereus (strain Q1), this protein is Pyridoxal 5'-phosphate synthase subunit PdxT.